Reading from the N-terminus, the 234-residue chain is MNNIDQTELDKFEKMAATWWDPNGSFKPIHLLNPLRLDYIQQKANGLFGKKVLDVGCGGGILSEAMAKAGANVTGIDMTTEPLDVARKHAEESGLTIDYRQTTIEDFVQNQTACHAEKFDVITCMEMLEHVPDPLSIIQSCKALLKPDGVLFFSTINRTLKAYMLVIIGAEYVLKMLPKGTHEFEKFIKPAELLNWCDMANLRCQEMKGYHFNPLTEKFWLNNDVSCNYIAMLK.

Residues Arg-36, Gly-56, Asp-77, and Met-125 each coordinate S-adenosyl-L-methionine.

It belongs to the methyltransferase superfamily. UbiG/COQ3 family.

It carries out the reaction a 3-demethylubiquinol + S-adenosyl-L-methionine = a ubiquinol + S-adenosyl-L-homocysteine + H(+). It catalyses the reaction a 3-(all-trans-polyprenyl)benzene-1,2-diol + S-adenosyl-L-methionine = a 2-methoxy-6-(all-trans-polyprenyl)phenol + S-adenosyl-L-homocysteine + H(+). It participates in cofactor biosynthesis; ubiquinone biosynthesis. Its function is as follows. O-methyltransferase that catalyzes the 2 O-methylation steps in the ubiquinone biosynthetic pathway. This chain is Ubiquinone biosynthesis O-methyltransferase, found in Actinobacillus pleuropneumoniae serotype 7 (strain AP76).